The chain runs to 349 residues: Very-long-chain 3-oxoacyl-CoA reductase (349 aa).

Residues 19-39 (AIIFALLLGVFKLTVFSLKFA) form a helical membrane-spanning segment. NADP(+) contacts are provided by Val65, Asp119, Asn146, Tyr221, Lys225, Val254, and Ser256. Catalysis depends on Tyr221, which acts as the Proton donor. The active-site Lowers pKa of active site Tyr is Lys225.

This sequence belongs to the short-chain dehydrogenases/reductases (SDR) family.

Its subcellular location is the endoplasmic reticulum membrane. The enzyme catalyses a very-long-chain (3R)-3-hydroxyacyl-CoA + NADP(+) = a very-long-chain 3-oxoacyl-CoA + NADPH + H(+). It functions in the pathway lipid metabolism; fatty acid biosynthesis. Its function is as follows. Component of the microsomal membrane bound fatty acid elongation system, which produces the 26-carbon very long-chain fatty acids (VLCFA) from palmitate. Catalyzes the reduction of the 3-ketoacyl-CoA intermediate that is formed in each cycle of fatty acid elongation. VLCFAs serve as precursors for ceramide and sphingolipids. This chain is Very-long-chain 3-oxoacyl-CoA reductase, found in Candida albicans (strain SC5314 / ATCC MYA-2876) (Yeast).